The following is a 361-amino-acid chain: Deoxyhypusine hydroxylase (361 aa).

HEAT-like PBS-type repeat units follow at residues 59–85, 94–120, 183–211, and 216–242; these read LKHE…VLEN, VRHE…YMQD, QRYR…GFRD, and FRHE…RLRD. Fe cation-binding residues include histidine 61, glutamate 62, histidine 96, and glutamate 97. Residues histidine 218, glutamate 219, histidine 251, and glutamate 252 each contribute to the Fe cation site.

This sequence belongs to the deoxyhypusine hydroxylase family. It depends on Fe(2+) as a cofactor.

It localises to the cytoplasm. Its subcellular location is the nucleus. The catalysed reaction is [eIF5A protein]-deoxyhypusine + AH2 + O2 = [eIF5A protein]-hypusine + A + H2O. Its pathway is protein modification; eIF5A hypusination. Catalyzes the hydroxylation of the N(6)-(4-aminobutyl)-L-lysine intermediate to form hypusine, an essential post-translational modification only found in mature eIF-5A factor. The sequence is that of Deoxyhypusine hydroxylase from Cryptococcus neoformans var. neoformans serotype D (strain B-3501A) (Filobasidiella neoformans).